A 325-amino-acid chain; its full sequence is Tetraacyldisaccharide 4'-kinase (325 aa).

An ATP-binding site is contributed by 55–62; that stretch reads TAGGNGKT.

The protein belongs to the LpxK family.

It catalyses the reaction a lipid A disaccharide + ATP = a lipid IVA + ADP + H(+). Its pathway is glycolipid biosynthesis; lipid IV(A) biosynthesis; lipid IV(A) from (3R)-3-hydroxytetradecanoyl-[acyl-carrier-protein] and UDP-N-acetyl-alpha-D-glucosamine: step 6/6. Its function is as follows. Transfers the gamma-phosphate of ATP to the 4'-position of a tetraacyldisaccharide 1-phosphate intermediate (termed DS-1-P) to form tetraacyldisaccharide 1,4'-bis-phosphate (lipid IVA). This Salmonella heidelberg (strain SL476) protein is Tetraacyldisaccharide 4'-kinase.